We begin with the raw amino-acid sequence, 547 residues long: GMP synthase [glutamine-hydrolyzing] (547 aa).

The Glutamine amidotransferase type-1 domain occupies 12 to 210; that stretch reads KILILDFGSQ…VLDIAGAKPD (199 aa). Cys-89 acts as the Nucleophile in catalysis. Catalysis depends on residues His-184 and Glu-186. One can recognise a GMPS ATP-PPase domain in the interval 211–403; sequence WIMRDHIEEA…LGLPAEMVYR (193 aa). Residue 238–244 coordinates ATP; the sequence is SGGVDSS.

In terms of assembly, homodimer.

The enzyme catalyses XMP + L-glutamine + ATP + H2O = GMP + L-glutamate + AMP + diphosphate + 2 H(+). The protein operates within purine metabolism; GMP biosynthesis; GMP from XMP (L-Gln route): step 1/1. Its function is as follows. Catalyzes the synthesis of GMP from XMP. This Burkholderia pseudomallei (strain 1710b) protein is GMP synthase [glutamine-hydrolyzing].